Here is a 158-residue protein sequence, read N- to C-terminus: Putative ribonucleoside-diphosphate reductase small chain B (158 aa).

It belongs to the ribonucleoside diphosphate reductase small chain family.

This chain is Putative ribonucleoside-diphosphate reductase small chain B (RNR2B), found in Arabidopsis thaliana (Mouse-ear cress).